The chain runs to 261 residues: tRNA U34 carboxymethyltransferase (261 aa).

Carboxy-S-adenosyl-L-methionine contacts are provided by residues Lys-25, Trp-39, Lys-44, Gly-63, 114 to 115, Tyr-135, and Arg-250; that span reads VE.

It belongs to the class I-like SAM-binding methyltransferase superfamily. CmoB family. Homotetramer.

The enzyme catalyses carboxy-S-adenosyl-L-methionine + 5-hydroxyuridine(34) in tRNA = 5-carboxymethoxyuridine(34) in tRNA + S-adenosyl-L-homocysteine + H(+). In terms of biological role, catalyzes carboxymethyl transfer from carboxy-S-adenosyl-L-methionine (Cx-SAM) to 5-hydroxyuridine (ho5U) to form 5-carboxymethoxyuridine (cmo5U) at position 34 in tRNAs. This chain is tRNA U34 carboxymethyltransferase, found in Helicobacter pylori (strain Shi470).